A 250-amino-acid polypeptide reads, in one-letter code: Putative HTH-type transcriptional regulatory protein PAE1627 (250 aa).

An HTH cro/C1-type domain is found at 129 to 183 (LRAKRQQAGLSLGTLATNLGVTRETVYRYERGEIEAPLKIAEKLINMFGEDITKK). The H-T-H motif DNA-binding region spans 140–159 (LGTLATNLGVTRETVYRYER).

In Pyrobaculum aerophilum (strain ATCC 51768 / DSM 7523 / JCM 9630 / CIP 104966 / NBRC 100827 / IM2), this protein is Putative HTH-type transcriptional regulatory protein PAE1627.